A 220-amino-acid chain; its full sequence is Superoxide dismutase [Cu-Zn], chloroplastic (220 aa).

The N-terminal 66 residues, Met-1–Ala-66, are a transit peptide targeting the chloroplast. Positions 112, 114, and 129 each coordinate Cu cation. Cys-123 and Cys-212 are oxidised to a cystine. Zn(2+) contacts are provided by His-129, His-137, His-146, and Asp-149. His-186 provides a ligand contact to Cu cation.

It belongs to the Cu-Zn superoxide dismutase family. Homotetramer. It depends on Cu cation as a cofactor. Requires Zn(2+) as cofactor.

It is found in the plastid. The protein resides in the chloroplast. The catalysed reaction is 2 superoxide + 2 H(+) = H2O2 + O2. Destroys radicals which are normally produced within the cells and which are toxic to biological systems. The sequence is that of Superoxide dismutase [Cu-Zn], chloroplastic (SODCP) from Solidago canadensis var. scabra (Tall goldenrod).